The following is a 315-amino-acid chain: MISNFDCTDNQASSKVLRPPGGGSSDIFGSEMPQTPRNVKNRMASNIFAAEKDNGVKNNGDAPRRGQKTVDSHSRLFGEPTRPITPGKNHMKSSIPFGQNTEAVAAQKLLTTNGHYNGKSGSVSSASSSVSSSTENLKMNSGSRSVFRNMSKPARAETPIPPADDALSIDNSCRDSEVGDVPADNRTVTKSDQVNEGCQTRRDSGNNPEQPYSLNKMAGVSNVKEPLGLCPNEIKEERQACAKLDSRNPITGLGLNGDGVGGLKPKKLRIREGNPVTGEGYKANDFTQRQESSNGGTPVINKNRIPPGGFSSGLW.

A compositionally biased stretch (polar residues) spans 1–14 (MISNFDCTDNQASS). 2 disordered regions span residues 1-37 (MISN…QTPR) and 51-89 (EKDN…PGKN). Serine 24 bears the Phosphoserine mark. Threonine 35 is modified (phosphothreonine). Residues 62–76 (APRRGQKTVDSHSRL) are compositionally biased toward basic and acidic residues. Threonine 81 and threonine 85 each carry phosphothreonine. Residues serine 94, serine 122, and serine 133 each carry the phosphoserine modification. Disordered regions lie at residues 116 to 166 (YNGK…ADDA) and 272 to 315 (EGNP…SGLW). A compositionally biased stretch (low complexity) spans 120-133 (SGSVSSASSSVSSS). 2 stretches are compositionally biased toward polar residues: residues 134-148 (TENL…SVFR) and 285-296 (DFTQRQESSNGG).

It belongs to the MAP Jupiter family.

The protein localises to the nucleus. The protein resides in the cytoplasm. It localises to the cytoskeleton. It is found in the spindle. Binds to all microtubule populations. The chain is Microtubule-associated protein Jupiter from Drosophila sechellia (Fruit fly).